A 462-amino-acid chain; its full sequence is NEDD8-activating enzyme E1 catalytic subunit (462 aa).

N-acetylalanine is present on Ala-2. The interaction with UBE2M N-terminus stretch occupies residues 53-70; the sequence is HPDFEPSTESLQFLLDTC. ATP contacts are provided by residues 100–124 and 148–171; these read DMDTIDVSNLNRQFLFRPKDVGRPK and IQDFNDTFYRQFHIIVCGLDSIIA. 2 interaction with UBE2M N-terminus regions span residues 157-161 and 192-217; these read RQFHI and PSSIVPLIDGGTEGFKGNARVILPGM. An interaction with NEDD8 region spans residues 227 to 229; that stretch reads LYP. The active-site Glycyl thioester intermediate is Cys-237. 2 interaction with NAE1 regions span residues 242–248 and 292–295; these read MPRLPEH and YNIR. An interaction with UBE2M N-terminus region spans residues 331–338; it reads IATSAYIP. Residues 352-357 are interaction with NEDD8; that stretch reads YTYTFE. The tract at residues 368-462 is interaction with UBE2M core domain; that stretch reads SQLPQNIQFS…QTVLFKLHFT (95 aa).

It belongs to the ubiquitin-activating E1 family. UBA3 subfamily. In terms of assembly, heterodimer of UBA3 and NAE1. Interacts with NEDD8, UBE2F and UBE2M. Binds ESR1 and ESR2 with bound steroid ligand. Interacts with TBATA. In terms of tissue distribution, ubiquitously expressed.

The catalysed reaction is ATP + [NEDD8 protein] + [E1 NEDD8-activating enzyme]-L-cysteine = AMP + diphosphate + [E1 NEDD8-activating enzyme]-S-[NEDD8 protein]-yl-L-cysteine.. It functions in the pathway protein modification; protein neddylation. Its activity is regulated as follows. Binding of TP53BP2 to the regulatory subunit NAE1 decreases activity. Functionally, catalytic subunit of the dimeric UBA3-NAE1 E1 enzyme. E1 activates NEDD8 by first adenylating its C-terminal glycine residue with ATP, thereafter linking this residue to the side chain of the catalytic cysteine, yielding a NEDD8-UBA3 thioester and free AMP. E1 finally transfers NEDD8 to the catalytic cysteine of UBE2M. Down-regulates steroid receptor activity. Necessary for cell cycle progression. In Rattus norvegicus (Rat), this protein is NEDD8-activating enzyme E1 catalytic subunit (Uba3).